Consider the following 56-residue polypeptide: UPF0391 membrane protein Noc_0484 (56 aa).

2 helical membrane-spanning segments follow: residues 6–26 (VTFL…IAGI) and 29–49 (EIAW…LVLG).

Belongs to the UPF0391 family.

The protein resides in the cell membrane. The polypeptide is UPF0391 membrane protein Noc_0484 (Nitrosococcus oceani (strain ATCC 19707 / BCRC 17464 / JCM 30415 / NCIMB 11848 / C-107)).